Consider the following 1086-residue polypeptide: Tyrosine-protein kinase receptor svh-2 (1086 aa).

The signal sequence occupies residues 1–34; it reads MVLGSSQSSAKELTTQSSIFRFLVLLLCFTSATG. Over 35–651 the chain is Extracellular; sequence GQINGKLLNG…DKKGSSPGWK (617 aa). Residues Asn-276, Asn-299, Asn-461, Asn-554, and Asn-617 are each glycosylated (N-linked (GlcNAc...) asparagine). The helical transmembrane segment at 652–672 threads the bilayer; the sequence is IAIAIISVMTIILIVAIIVYY. The Cytoplasmic portion of the chain corresponds to 673–1086; that stretch reads MRNRFPRIKT…LLSECSETSV (414 aa). A Protein kinase domain is found at 735–996; that stretch reads VDKLDPIGQG…SDLVTIIPNV (262 aa). ATP contacts are provided by residues 741–749 and Lys-767; that span reads IGQGHYGVV. The active-site Proton acceptor is Asp-858. Phosphotyrosine is present on Tyr-890. Residues 1056–1086 are disordered; that stretch reads AELPSDSPSTSTAIPQSTPYQLLSECSETSV. The segment covering 1061–1086 has biased composition (polar residues); sequence DSPSTSTAIPQSTPYQLLSECSETSV.

Belongs to the protein kinase superfamily. Tyr protein kinase family. As to quaternary structure, interacts (via cytoplasmic domain) with mlk-1. Interacts with shc-1 (via SH2 domain). May interact (when tyrosine-phosphorylated) with tns-1 (via SH2 domain). In terms of processing, may be autophosphorylated on Tyr-890 following dimerization. As to expression, expressed in body wall and vulva muscles, pharynx, intestine, excretory canals, distal tip cells and some neurons. Expressed in D-type motor neurons upon axon injury.

Its subcellular location is the cell membrane. The enzyme catalyses L-tyrosyl-[protein] + ATP = O-phospho-L-tyrosyl-[protein] + ADP + H(+). Its function is as follows. Receptor tyrosine kinase which may phosphorylate mlk-1, a component of the mlk-1, mek-1 and kgb-1 pathway. Involved in axon regeneration after injury by promoting the generation of productive and stable growth cones. This chain is Tyrosine-protein kinase receptor svh-2, found in Caenorhabditis elegans.